A 207-amino-acid polypeptide reads, in one-letter code: Ribosomal RNA small subunit methyltransferase G (207 aa).

S-adenosyl-L-methionine contacts are provided by residues Gly75, Leu80, 126-127, and Arg141; that span reads VE.

It belongs to the methyltransferase superfamily. RNA methyltransferase RsmG family.

Its subcellular location is the cytoplasm. It carries out the reaction guanosine(527) in 16S rRNA + S-adenosyl-L-methionine = N(7)-methylguanosine(527) in 16S rRNA + S-adenosyl-L-homocysteine. Functionally, specifically methylates the N7 position of guanine in position 527 of 16S rRNA. This Psychromonas ingrahamii (strain DSM 17664 / CCUG 51855 / 37) protein is Ribosomal RNA small subunit methyltransferase G.